The chain runs to 28 residues: Grammistin Gs A (28 aa).

Belongs to the grammistin family. Group 3 subfamily. Exists as aggregates of 3-4 molecules. In terms of tissue distribution, expressed by the skin glands.

It is found in the secreted. In terms of biological role, thanks to its amphiphilic alpha-helice(s), it may integrate into membrane phospholipids, leading to lysis of the membrane. Has no substantial hemolytic activity. Has antibacterial activity with a broad spectrum against various species of bacteria including both Gram-positive and Gram-negative groups. The polypeptide is Grammistin Gs A (Grammistes sexlineatus (Goldenstriped soapfish)).